Consider the following 773-residue polypeptide: 4'-phosphopantetheine phosphatase (773 aa).

Ala-2 carries the N-acetylalanine modification. A pantothenate kinase region spans residues Ala-2–Ala-402. Acetyl-CoA is bound by residues Ser-196 and Ser-199. Position 320 is a 3'-nitrotyrosine (Tyr-320). Residues Ser-393 and Ser-404 each carry the phosphoserine modification. The tract at residues Arg-403–Glu-773 is 4'-phosphopantetheine phosphatase. A Phosphothreonine modification is found at Thr-406. Asp-623, Asn-624, and Asp-659 together coordinate Mn(2+). The Subfamily II EGMGR motif motif lies at Glu-724 to Arg-728.

It in the N-terminal section; belongs to the type II pantothenate kinase family. The protein in the C-terminal section; belongs to the damage-control phosphatase family. Phosphopantetheine phosphatase II subfamily. Homodimer. Interacts with PKM. Mn(2+) serves as cofactor. Ni(2+) is required as a cofactor. Widely expressed with high expression in the muscle. Expressed in the retina and lens epithelium, mainly in ganglion cell layer, outer plexiform layer and retinal pigment layer (at protein level).

It is found in the cytoplasm. It carries out the reaction (R)-4'-phosphopantetheine + H2O = (R)-pantetheine + phosphate. It catalyses the reaction (R)-4'-phosphopantetheine sulfonate + H2O = (R)-pantetheine sulfonate + phosphate. The catalysed reaction is (R)-4'-phospho-S-sulfopantetheine + H2O = (R)-S-sulfopantetheine + phosphate. With respect to regulation, activity is strongly promoted by Co(2+), Ni(2+), Mg(2+) and Mn(2+). Activity is inhibited by EDTA. In terms of biological role, phosphatase which shows a preference for 4'-phosphopantetheine and its oxidatively damaged forms (sulfonate or S-sulfonate), providing strong indirect evidence that the phosphatase activity pre-empts damage in the coenzyme A (CoA) pathway. Hydrolyzing excess 4'-phosphopantetheine could constitute a directed overflow mechanism to prevent its oxidation to the S-sulfonate, sulfonate, or other forms. Hydrolyzing 4'-phosphopantetheine sulfonate or S-sulfonate would forestall their conversion to inactive forms of CoA and acyl carrier protein. May play a role in the physiological regulation of CoA intracellular levels. This is 4'-phosphopantetheine phosphatase from Homo sapiens (Human).